The sequence spans 339 residues: MLTRNPIVPENHVSNPIVDYEFNQDQSCLIVSTPKSFDIYNVHPLKRIMSQEMPDAGTIRMLHRTNYIAFVSTKKELLHIWDDVKKQDITRVKLDAAVKDLFLSREFIVVSQGDVISIFKFGNPWNKITEDIKFGGVCEFANGLLVYSNEFNLGQIHVTRLQTDAEQVVGKGVLVKAHANPVKMVRLNRKGDMVATCSQDGTLIRVFQTDNGVLVREFRRGLDRTSIIDMRWSPDGSKLAVVSDKWTLHVFEVFNDAENKRHVLKDWINIKYFQSEWSICNFKLKVSKGSNDCKIAWISDTGLVIVWPNRRLADTFKLNYNDDEHVWWLQLNQRNEIPL.

2 WD repeats span residues 177–217 (AHAN…LVRE) and 222–261 (LDRT…ENKR).

It belongs to the WD repeat PROPPIN family.

The protein localises to the vacuole membrane. It is found in the cytoplasmic vesicle membrane. Functionally, involved in mitochondrial or peroxisomal functions and amino acid signaling pathways. This Kluyveromyces lactis (strain ATCC 8585 / CBS 2359 / DSM 70799 / NBRC 1267 / NRRL Y-1140 / WM37) (Yeast) protein is SVP1-like protein 2 (HSV2).